Consider the following 237-residue polypeptide: Phosphoribosylaminoimidazole-succinocarboxamide synthase (237 aa).

This sequence belongs to the SAICAR synthetase family.

The enzyme catalyses 5-amino-1-(5-phospho-D-ribosyl)imidazole-4-carboxylate + L-aspartate + ATP = (2S)-2-[5-amino-1-(5-phospho-beta-D-ribosyl)imidazole-4-carboxamido]succinate + ADP + phosphate + 2 H(+). Its pathway is purine metabolism; IMP biosynthesis via de novo pathway; 5-amino-1-(5-phospho-D-ribosyl)imidazole-4-carboxamide from 5-amino-1-(5-phospho-D-ribosyl)imidazole-4-carboxylate: step 1/2. The sequence is that of Phosphoribosylaminoimidazole-succinocarboxamide synthase from Serratia proteamaculans (strain 568).